Consider the following 350-residue polypeptide: DNA polymerase delta subunit 3 (350 aa).

Residues E131–K350 are disordered. Basic and acidic residues-rich tracts occupy residues T146–G162 and M172–L195. T223 is modified (phosphothreonine). Residue S230 is modified to Phosphoserine. Over residues S234–D248 the composition is skewed to basic and acidic residues. The segment covering D249–L262 has biased composition (acidic residues). Basic and acidic residues predominate over residues S274–E286. The span at L320–N332 shows a compositional bias: polar residues.

As to quaternary structure, DNA polymerase delta is a heterotrimer of POL3, POL32 and HYS2. POL32 can form homodimers.

Its subcellular location is the nucleus. DNA polymerase delta (DNA polymerase III) participates in chromosomal DNA replication. It is required during synthesis of the leading and lagging DNA strands at the replication fork and binds at/or near replication origins and moves along DNA with the replication fork. It has 3'-5' proofreading exonuclease activity that correct errors arising during DNA replication. It is also involved in DNA synthesis during DNA repair. This chain is DNA polymerase delta subunit 3 (POL32), found in Saccharomyces cerevisiae (strain ATCC 204508 / S288c) (Baker's yeast).